The chain runs to 114 residues: T cell receptor beta variable 5-4 (114 aa).

The first 21 residues, 1–21 (MGPGLLCWALLCLLGAGSVET), serve as a signal peptide directing secretion. Residues 22 to 114 (GVTQSPTHLI…SALYLCASSL (93 aa)) form the Ig-like domain. Cysteine 42 and cysteine 110 form a disulfide bridge. An N-linked (GlcNAc...) asparagine glycan is attached at asparagine 90.

As to quaternary structure, alpha-beta TR is a heterodimer composed of an alpha and beta chain; disulfide-linked. The alpha-beta TR is associated with the transmembrane signaling CD3 coreceptor proteins to form the TR-CD3 (TcR or TCR). The assembly of alpha-beta TR heterodimers with CD3 occurs in the endoplasmic reticulum where a single alpha-beta TR heterodimer associates with one CD3D-CD3E heterodimer, one CD3G-CD3E heterodimer and one CD247 homodimer forming a stable octameric structure. CD3D-CD3E and CD3G-CD3E heterodimers preferentially associate with TR alpha and TR beta chains, respectively. The association of the CD247 homodimer is the last step of TcR assembly in the endoplasmic reticulum and is required for transport to the cell surface.

The protein resides in the cell membrane. Its function is as follows. V region of the variable domain of T cell receptor (TR) beta chain that participates in the antigen recognition. Alpha-beta T cell receptors are antigen specific receptors which are essential to the immune response and are present on the cell surface of T lymphocytes. Recognize peptide-major histocompatibility (MH) (pMH) complexes that are displayed by antigen presenting cells (APC), a prerequisite for efficient T cell adaptive immunity against pathogens. Binding of alpha-beta TR to pMH complex initiates TR-CD3 clustering on the cell surface and intracellular activation of LCK that phosphorylates the ITAM motifs of CD3G, CD3D, CD3E and CD247 enabling the recruitment of ZAP70. In turn ZAP70 phosphorylates LAT, which recruits numerous signaling molecules to form the LAT signalosome. The LAT signalosome propagates signal branching to three major signaling pathways, the calcium, the mitogen-activated protein kinase (MAPK) kinase and the nuclear factor NF-kappa-B (NF-kB) pathways, leading to the mobilization of transcription factors that are critical for gene expression and essential for T cell growth and differentiation. The T cell repertoire is generated in the thymus, by V-(D)-J rearrangement. This repertoire is then shaped by intrathymic selection events to generate a peripheral T cell pool of self-MH restricted, non-autoaggressive T cells. Post-thymic interaction of alpha-beta TR with the pMH complexes shapes TR structural and functional avidity. This is T cell receptor beta variable 5-4 from Homo sapiens (Human).